Reading from the N-terminus, the 751-residue chain is Photosystem I P700 chlorophyll a apoprotein A1 (751 aa).

The next 8 helical transmembrane spans lie at 71-94 (VFSAHFGQLSIIFLWLSGMYFHGA), 157-180 (LYCTAIGALIFASLMLFAGWFHYH), 196-220 (LNHHLAGLLGLGSLSWAGHQIHVSL), 292-310 (IAHHHLAIAILFLIAGHMY), 347-370 (WHAQLSLNLAMLGSTTIVVAHHMY), 386-412 (LSLFTHHMWIGGFLIVGAAAHAAIFMV), 434-456 (AIISHLNWVCIFLGFHSFGLYIH), and 532-550 (FLVHHIHAFTIHVTVLILL). [4Fe-4S] cluster-binding residues include cysteine 574 and cysteine 583. 2 helical membrane-spanning segments follow: residues 590–611 (HVFLGLFWMYNSISVVIFHFSW) and 665–687 (LSAYGLFFLGAHFVWAFSLMFLF). Position 676 (histidine 676) interacts with chlorophyll a'. The chlorophyll a site is built by methionine 684 and tyrosine 692. Tryptophan 693 serves as a coordination point for phylloquinone. Residues 725–745 (AVGVTHYLLGGIATTWAFFLA) form a helical membrane-spanning segment.

This sequence belongs to the PsaA/PsaB family. The PsaA/B heterodimer binds the P700 chlorophyll special pair and subsequent electron acceptors. PSI consists of a core antenna complex that captures photons, and an electron transfer chain that converts photonic excitation into a charge separation. The eukaryotic PSI reaction center is composed of at least 11 subunits. The cofactor is P700 is a chlorophyll a/chlorophyll a' dimer, A0 is one or more chlorophyll a, A1 is one or both phylloquinones and FX is a shared 4Fe-4S iron-sulfur center..

It localises to the plastid. The protein localises to the chloroplast thylakoid membrane. It carries out the reaction reduced [plastocyanin] + hnu + oxidized [2Fe-2S]-[ferredoxin] = oxidized [plastocyanin] + reduced [2Fe-2S]-[ferredoxin]. PsaA and PsaB bind P700, the primary electron donor of photosystem I (PSI), as well as the electron acceptors A0, A1 and FX. PSI is a plastocyanin-ferredoxin oxidoreductase, converting photonic excitation into a charge separation, which transfers an electron from the donor P700 chlorophyll pair to the spectroscopically characterized acceptors A0, A1, FX, FA and FB in turn. Oxidized P700 is reduced on the lumenal side of the thylakoid membrane by plastocyanin. In Zea mays (Maize), this protein is Photosystem I P700 chlorophyll a apoprotein A1.